A 217-amino-acid polypeptide reads, in one-letter code: Cytochrome c biogenesis ATP-binding export protein CcmA (217 aa).

An ABC transporter domain is found at Phe6–Glu215. Gly38–Ser45 is a binding site for ATP.

This sequence belongs to the ABC transporter superfamily. CcmA exporter (TC 3.A.1.107) family. The complex is composed of two ATP-binding proteins (CcmA) and two transmembrane proteins (CcmB).

It is found in the cell inner membrane. The catalysed reaction is heme b(in) + ATP + H2O = heme b(out) + ADP + phosphate + H(+). In terms of biological role, part of the ABC transporter complex CcmAB involved in the biogenesis of c-type cytochromes; once thought to export heme, this seems not to be the case, but its exact role is uncertain. Responsible for energy coupling to the transport system. This Paramagnetospirillum magneticum (strain ATCC 700264 / AMB-1) (Magnetospirillum magneticum) protein is Cytochrome c biogenesis ATP-binding export protein CcmA.